Reading from the N-terminus, the 573-residue chain is MTEKSPKPHKRSDAITEGPNRAPARAMLRAAGFTPEDLRKPIIGIANTWIEIGPCNLHLRELAEHIKQGVREAGGTPMEFNTVSISDGITMGSEGMKASLVSREVIADSIELVARGNLFDGLIALSGCDKTIPGTIMALERLDIPGLMLYGGSIAPGKFHAQKVTIQDVFEAVGTHARGKMSDADLEELEHNACPGAGACGGQFTANTMSMCGEFLGISPMGANSVPAMTVEKQQVARRCGHLVMELVRRDIRPSQIITRKAIENAIASVAASGGSTNAVLHLLAIAHEMDVELNIEDFDKISSRTPLLCELKPAGRFTATDLHDAGGIPLVAQRLLEANLLHADALTVTGKTIAEEAKQAKETPGQEVVRPLTDPIKATGGLMILKGNLASEGCVVKLVGHKKLFFEGPARVFESEEEAFAGVEDRTIQAGEVVVVRYEGPKGGPGMREMLGVTAAIAGTELAETVALITDGRFSGATRGLSVGHVAPEAANGGAIAVVRNGDIITLDVERRELRVHLTDAELEARLRNWRAPEPRYKRGVFAKYASTVSSASFGAVTGSTIENKTLAGSTK.

Positions 1–14 (MTEKSPKPHKRSDA) are enriched in basic and acidic residues. Positions 1 to 21 (MTEKSPKPHKRSDAITEGPNR) are disordered. C55 is a [2Fe-2S] cluster binding site. D87 contacts Mg(2+). C128 contributes to the [2Fe-2S] cluster binding site. Positions 129 and 130 each coordinate Mg(2+). N6-carboxylysine is present on K130. C200 contacts [2Fe-2S] cluster. E450 serves as a coordination point for Mg(2+). Residue S476 is the Proton acceptor of the active site.

This sequence belongs to the IlvD/Edd family. As to quaternary structure, homodimer. [2Fe-2S] cluster is required as a cofactor. It depends on Mg(2+) as a cofactor.

It carries out the reaction (2R)-2,3-dihydroxy-3-methylbutanoate = 3-methyl-2-oxobutanoate + H2O. It catalyses the reaction (2R,3R)-2,3-dihydroxy-3-methylpentanoate = (S)-3-methyl-2-oxopentanoate + H2O. The protein operates within amino-acid biosynthesis; L-isoleucine biosynthesis; L-isoleucine from 2-oxobutanoate: step 3/4. It functions in the pathway amino-acid biosynthesis; L-valine biosynthesis; L-valine from pyruvate: step 3/4. Functionally, functions in the biosynthesis of branched-chain amino acids. Catalyzes the dehydration of (2R,3R)-2,3-dihydroxy-3-methylpentanoate (2,3-dihydroxy-3-methylvalerate) into 2-oxo-3-methylpentanoate (2-oxo-3-methylvalerate) and of (2R)-2,3-dihydroxy-3-methylbutanoate (2,3-dihydroxyisovalerate) into 2-oxo-3-methylbutanoate (2-oxoisovalerate), the penultimate precursor to L-isoleucine and L-valine, respectively. This Koribacter versatilis (strain Ellin345) protein is Dihydroxy-acid dehydratase.